The chain runs to 405 residues: Accessory Sec system protein translocase subunit SecY2 (405 aa).

Helical transmembrane passes span 14–34 (LFTS…LPFV), 65–85 (IFSV…MFSF), 104–124 (MYLT…RLPV), 131–151 (ILVV…LVWL), 156–176 (ASMG…LNIP), 191–211 (GIIV…ALMY), 247–267 (MYVM…GFIF), 285–305 (PLWV…FAFV), 343–363 (FSVI…LFVL), and 368–388 (LLRL…IFTI).

It belongs to the SecY/SEC61-alpha family. SecY2 subfamily. In terms of assembly, component of the accessory SecA2/SecY2 protein translocase complex required to export cell wall proteins. May form heterotrimers with SecE and SecG subunits.

It is found in the cell membrane. Its function is as follows. Part of the accessory SecA2/SecY2 system specifically required for export of possible cell wall proteins. The central subunit of a protein translocation channel. The chain is Accessory Sec system protein translocase subunit SecY2 from Streptococcus pneumoniae serotype 4 (strain ATCC BAA-334 / TIGR4).